A 655-amino-acid polypeptide reads, in one-letter code: p-hydroxybenzoic acid efflux pump subunit AaeB (655 aa).

At 1 to 12 (MGIFSIANQHIR) the chain is on the periplasmic side. The helical transmembrane segment at 13-33 (FAVKLACAIVLALFIGFHFQL) threads the bilayer. Residues 34–37 (ETPR) lie on the Cytoplasmic side of the membrane. A helical membrane pass occupies residues 38-58 (WAVLTAAIVAAGPAFAAGGEP). Over 59–68 (YSGAIRYRGM) the chain is Periplasmic. The chain crosses the membrane as a helical span at residues 69-89 (LRIIGTFIGCIAALIIIISMI). The Cytoplasmic portion of the chain corresponds to 90 to 92 (RAP). Residues 93–113 (LLMILVCCVWAGFCTWISSLV) traverse the membrane as a helical segment. Over 114–120 (RIENSYA) the chain is Periplasmic. Residues 121 to 141 (WGLSGYTALIIVITIQTEPLL) form a helical membrane-spanning segment. Residues 142-151 (TPQFALERCS) are Cytoplasmic-facing. A helical membrane pass occupies residues 152 to 172 (EIVIGIGCAILADLLFSPRSI). The Periplasmic portion of the chain corresponds to 173–369 (KQEVDRELDC…RTTLSCILGT (197 aa)). The chain crosses the membrane as a helical span at residues 370-390 (LFWLWTGWTSGNGAMVMIAVV). Residues 391–406 (TSLAMRLPNPRMVCID) lie on the Cytoplasmic side of the membrane. Residues 407-427 (FIYGTLAALPLGLLYFLVIIP) form a helical membrane-spanning segment. The Periplasmic portion of the chain corresponds to 428 to 430 (NTQ). Residues 431-451 (QSMLLLCLSLAVLGFFIGIEV) traverse the membrane as a helical segment. At 452–459 (QKRRLGSM) the chain is on the cytoplasmic side. The chain crosses the membrane as a helical span at residues 460–480 (GALASTINIIVLDNPMTFHFI). Gln-481 is a topological domain (periplasmic). A helical transmembrane segment spans residues 482-502 (FLDSALGQIVGCMLAFIVILL). Over 503 to 655 (VRDKSKDRTG…HKYQNALTDS (153 aa)) the chain is Cytoplasmic.

Belongs to the aromatic acid exporter ArAE (TC 2.A.85) family.

Its subcellular location is the cell inner membrane. Functionally, forms an efflux pump with AaeA. Could function as a metabolic relief valve, allowing to eliminate certain compounds when they accumulate to high levels in the cell. The chain is p-hydroxybenzoic acid efflux pump subunit AaeB from Salmonella typhi.